Reading from the N-terminus, the 420-residue chain is Protein Rv2184c (420 aa).

Belongs to the arsA ATPase family.

In Mycobacterium tuberculosis (strain ATCC 25618 / H37Rv), this protein is Protein Rv2184c.